Consider the following 547-residue polypeptide: Sensor histidine kinase CitA (547 aa).

Over 1 to 23 the chain is Cytoplasmic; sequence MSIYPMYTRKITHWFARRSFQNR. A helical membrane pass occupies residues 24–44; that stretch reads IFLLILFTSTIVMLAMSWYLT. Residues 45–180 are Periplasmic-facing; it reads DITEERLHYQ…TIEQLENWLS (136 aa). Citrate is bound by residues arginine 109, histidine 112, arginine 150, and lysine 152. A helical membrane pass occupies residues 181–201; it reads LQISSLLIPMAIMLLLLLFCA. At 202-547 the chain is on the cytoplasmic side; sequence RRFSLHIKKQ…IPLTRDEHHG (346 aa). In terms of domain architecture, PAS spans 225 to 264; that stretch reads IQQSVLFESVFEGLIAIDSDYKITAINQTARRLLNLSQPE. Residues 347-542 form the Histidine kinase domain; it reads AVQHEHRNLI…IFTLYIPLTR (196 aa). Phosphohistidine; by autocatalysis is present on histidine 350.

As to quaternary structure, homodimer. In vitro CitB and the CitA kinase domain form a complex, formation of which is enhanced by ATP. Autophosphorylated.

Its subcellular location is the cell inner membrane. The catalysed reaction is ATP + protein L-histidine = ADP + protein N-phospho-L-histidine.. Member of the two-component regulatory system CitA/CitB. Probably activates CitB by phosphorylation. The periplasmic domain binds H-citrate(2-), which is essential for induction of the citrate-fermentation genes. The chain is Sensor histidine kinase CitA (citA) from Klebsiella pneumoniae.